Reading from the N-terminus, the 459-residue chain is Putrescine aminotransferase (459 aa).

Pyridoxal 5'-phosphate-binding positions include 150–151 (GT) and Gln274. An N6-(pyridoxal phosphate)lysine modification is found at Lys300. Thr332 provides a ligand contact to pyridoxal 5'-phosphate.

This sequence belongs to the class-III pyridoxal-phosphate-dependent aminotransferase family. Putrescine aminotransferase subfamily. It depends on pyridoxal 5'-phosphate as a cofactor.

The catalysed reaction is an alkane-alpha,omega-diamine + 2-oxoglutarate = an omega-aminoaldehyde + L-glutamate. It carries out the reaction putrescine + 2-oxoglutarate = 1-pyrroline + L-glutamate + H2O. It catalyses the reaction cadaverine + 2-oxoglutarate = 5-aminopentanal + L-glutamate. It functions in the pathway amine and polyamine degradation; putrescine degradation; 4-aminobutanal from putrescine (transaminase route): step 1/1. In terms of biological role, catalyzes the aminotransferase reaction from putrescine to 2-oxoglutarate, leading to glutamate and 4-aminobutanal, which spontaneously cyclizes to form 1-pyrroline. This is the first step in one of two pathways for putrescine degradation, where putrescine is converted into 4-aminobutanoate (gamma-aminobutyrate or GABA) via 4-aminobutanal. Also functions as a cadaverine transaminase in a a L-lysine degradation pathway to succinate that proceeds via cadaverine, glutarate and L-2-hydroxyglutarate. This Escherichia coli O6:K15:H31 (strain 536 / UPEC) protein is Putrescine aminotransferase.